The chain runs to 265 residues: MICOS complex subunit Mic27 (265 aa).

The N-terminal 27 residues, 1-27, are a transit peptide targeting the mitochondrion; it reads MAAFRMGKLTTIPAGLIYASINVRLAK. At 28–110 the chain is on the mitochondrial intermembrane side; the sequence is EEEPKKQLVR…YVYLKNPPQD (83 aa). A helical membrane pass occupies residues 111-129; the sequence is FLPKMGVITASGLAGLLSA. Residues 130–137 are Mitochondrial matrix-facing; that stretch reads RKGSRFKK. The chain crosses the membrane as a helical span at residues 138–155; the sequence is IAYPLGLATLGATVCYPA. Residues 156–265 lie on the Mitochondrial intermembrane side of the membrane; the sequence is QSVIIAKITG…DDKDMYSTRS (110 aa). Disordered stretches follow at residues 187–215 and 229–265; these read SENE…PDLK and VIKS…STRS. Ser-204 bears the Phosphoserine mark. A compositionally biased stretch (polar residues) spans 229 to 241; it reads VIKSESTSGTTQF. Residues 246–265 are compositionally biased toward basic and acidic residues; that stretch reads KLMDHGQSHPDDKDMYSTRS.

The protein belongs to the apolipoprotein O/MICOS complex subunit Mic27 family. In terms of assembly, component of the mitochondrial contact site and cristae organizing system (MICOS) complex, composed of at least MICOS10/MIC10, CHCHD3/MIC19, CHCHD6/MIC25, APOOL/MIC27, IMMT/MIC60, APOO/MIC23/MIC26 and MICOS13/MIC13. This complex was also known under the names MINOS or MitOS complex. The MICOS complex associates with mitochondrial outer membrane proteins SAMM50, MTX1 and MTX2 (together described as components of the mitochondrial outer membrane sorting assembly machinery (SAM) complex) and DNAJC11, mitochondrial inner membrane protein TMEM11 and with HSPA9. The MICOS and SAM complexes together with DNAJC11 are part of a large protein complex spanning both membranes termed the mitochondrial intermembrane space bridging (MIB) complex. Interacts with MICOS10/MIC10, IMMT/MIC60 and APOO/MIC23/MIC26.

It is found in the mitochondrion inner membrane. The protein localises to the mitochondrion. In terms of biological role, component of the MICOS complex, a large protein complex of the mitochondrial inner membrane that plays crucial roles in the maintenance of crista junctions, inner membrane architecture, and formation of contact sites to the outer membrane. Specifically binds to cardiolipin (in vitro) but not to the precursor lipid phosphatidylglycerol. Plays a crucial role in crista junction formation and mitochondrial function. The protein is MICOS complex subunit Mic27 (Apool) of Mus musculus (Mouse).